A 698-amino-acid chain; its full sequence is Probable Xaa-Pro aminopeptidase P (698 aa).

Positions 509, 520, 604, and 618 each coordinate Mn(2+).

It belongs to the peptidase M24B family. Requires Mn(2+) as cofactor.

The enzyme catalyses Release of any N-terminal amino acid, including proline, that is linked to proline, even from a dipeptide or tripeptide.. Its function is as follows. Catalyzes the removal of a penultimate prolyl residue from the N-termini of peptides. The polypeptide is Probable Xaa-Pro aminopeptidase P (AMPP) (Arthroderma benhamiae (strain ATCC MYA-4681 / CBS 112371) (Trichophyton mentagrophytes)).